Here is a 135-residue protein sequence, read N- to C-terminus: Putative pre-16S rRNA nuclease (135 aa).

This sequence belongs to the YqgF nuclease family.

It localises to the cytoplasm. In terms of biological role, could be a nuclease involved in processing of the 5'-end of pre-16S rRNA. This is Putative pre-16S rRNA nuclease from Clostridium novyi (strain NT).